A 195-amino-acid chain; its full sequence is GTP-dependent dephospho-CoA kinase (195 aa).

GTP contacts are provided by Asp-49, Val-50, Asp-68, Glu-127, and Asp-150.

The protein belongs to the GTP-dependent DPCK family.

The enzyme catalyses 3'-dephospho-CoA + GTP = GDP + CoA + H(+). Its pathway is cofactor biosynthesis; coenzyme A biosynthesis. Its function is as follows. Catalyzes the GTP-dependent phosphorylation of the 3'-hydroxyl group of dephosphocoenzyme A to form coenzyme A (CoA). In Methanosarcina acetivorans (strain ATCC 35395 / DSM 2834 / JCM 12185 / C2A), this protein is GTP-dependent dephospho-CoA kinase.